The chain runs to 309 residues: Ornithine carbamoyltransferase (309 aa).

Carbamoyl phosphate contacts are provided by residues 57–60 (STRT), Gln84, Arg108, and 135–138 (HPCQ). L-ornithine contacts are provided by residues Asn166, Asp226, and 230–231 (SM). Carbamoyl phosphate is bound by residues 265–266 (CL) and Arg293.

This sequence belongs to the aspartate/ornithine carbamoyltransferase superfamily. OTCase family.

It localises to the cytoplasm. The enzyme catalyses carbamoyl phosphate + L-ornithine = L-citrulline + phosphate + H(+). Its pathway is amino-acid biosynthesis; L-arginine biosynthesis; L-arginine from L-ornithine and carbamoyl phosphate: step 1/3. In terms of biological role, reversibly catalyzes the transfer of the carbamoyl group from carbamoyl phosphate (CP) to the N(epsilon) atom of ornithine (ORN) to produce L-citrulline. The sequence is that of Ornithine carbamoyltransferase from Rhizorhabdus wittichii (strain DSM 6014 / CCUG 31198 / JCM 15750 / NBRC 105917 / EY 4224 / RW1) (Sphingomonas wittichii).